The following is a 135-amino-acid chain: ATP synthase epsilon chain (135 aa).

Belongs to the ATPase epsilon chain family. In terms of assembly, F-type ATPases have 2 components, CF(1) - the catalytic core - and CF(0) - the membrane proton channel. CF(1) has five subunits: alpha(3), beta(3), gamma(1), delta(1), epsilon(1). CF(0) has three main subunits: a, b and c.

The protein localises to the cell inner membrane. Functionally, produces ATP from ADP in the presence of a proton gradient across the membrane. This Rhizobium etli (strain CIAT 652) protein is ATP synthase epsilon chain.